Here is a 670-residue protein sequence, read N- to C-terminus: Microtubule-associated protein ssm4 (670 aa).

A CAP-Gly domain is found at 23 to 65 (GSTDFESGIWLGVELLNGKGKNDGSVKGKRYFSCEKGKGIFVR). Coiled-coil stretches lie at residues 209–254 (KSEL…KNSI) and 404–582 (VKTR…KLAD). A Phosphoserine modification is found at Ser-460. Thr-606 carries the phosphothreonine modification.

It is found in the cytoplasm. Its subcellular location is the cytoskeleton. The protein localises to the spindle. In terms of biological role, binds to nuclear microtubules with the effect of either modifying their structure or function. This then promotes meiotic nuclear division. The sequence is that of Microtubule-associated protein ssm4 (ssm4) from Schizosaccharomyces pombe (strain 972 / ATCC 24843) (Fission yeast).